A 418-amino-acid chain; its full sequence is Tyrosine--tRNA ligase 1 (418 aa).

Tyr34 serves as a coordination point for L-tyrosine. The 'HIGH' region signature appears at 39 to 48; the sequence is PTADSLHIGH. Tyr169 and Gln173 together coordinate L-tyrosine. The 'KMSKS' region motif lies at 230-234; sequence KFGKT. Position 233 (Lys233) interacts with ATP. Positions 352 to 418 constitute an S4 RNA-binding domain; it reads TVLIDLLVES…GKKKYFLIRY (67 aa).

It belongs to the class-I aminoacyl-tRNA synthetase family. TyrS type 1 subfamily. Homodimer.

Its subcellular location is the cytoplasm. The catalysed reaction is tRNA(Tyr) + L-tyrosine + ATP = L-tyrosyl-tRNA(Tyr) + AMP + diphosphate + H(+). Its function is as follows. Catalyzes the attachment of tyrosine to tRNA(Tyr) in a two-step reaction: tyrosine is first activated by ATP to form Tyr-AMP and then transferred to the acceptor end of tRNA(Tyr). This Bacillus cereus (strain ATCC 14579 / DSM 31 / CCUG 7414 / JCM 2152 / NBRC 15305 / NCIMB 9373 / NCTC 2599 / NRRL B-3711) protein is Tyrosine--tRNA ligase 1.